The following is a 285-amino-acid chain: MSQLKPQEIVRLGDIQMANHLPFVLFGGMNVLESKDLAFEIAETYVDICKRLEIPYVFKASFDKANRSSLHSFRGPGLEKGIEWLGEIKKHFNVPIITDVHEPYQAAPVAEVADIIQLPAFLSRQTDLVEAMAKTQAIINIKKAQFLSPREMNHILNKCLEAGNDKLILCERGTSFGYNNLVVDMLGFDTMKEMNVPVFFDVTHALQTPGGRADSAGGRRAQITTLARAGMATGLAGLFLEAHPDPEKAKCDGPCALRLSQLEPFLAQLKELDALVKGFKKLDTH.

This sequence belongs to the KdsA family.

It is found in the cytoplasm. It catalyses the reaction D-arabinose 5-phosphate + phosphoenolpyruvate + H2O = 3-deoxy-alpha-D-manno-2-octulosonate-8-phosphate + phosphate. It functions in the pathway carbohydrate biosynthesis; 3-deoxy-D-manno-octulosonate biosynthesis; 3-deoxy-D-manno-octulosonate from D-ribulose 5-phosphate: step 2/3. The protein operates within bacterial outer membrane biogenesis; lipopolysaccharide biosynthesis. In Acinetobacter baylyi (strain ATCC 33305 / BD413 / ADP1), this protein is 2-dehydro-3-deoxyphosphooctonate aldolase.